The following is a 177-amino-acid chain: Putative rubredoxin (177 aa).

The Rubredoxin-like domain occupies 1–38; it reads MKICRICGYQIPEGEFNLLEDGWVCPRCGVGKEELQDS. Positions 4, 7, 25, and 28 each coordinate Fe cation.

Belongs to the rubredoxin family. Fe(3+) serves as cofactor.

The sequence is that of Putative rubredoxin (rdxA) from Methanothermobacter thermautotrophicus (strain ATCC 29096 / DSM 1053 / JCM 10044 / NBRC 100330 / Delta H) (Methanobacterium thermoautotrophicum).